Consider the following 233-residue polypeptide: Lipoprotein-releasing system ATP-binding protein LolD (233 aa).

One can recognise an ABC transporter domain in the interval 6 to 233 (LQCDNLCKRY…TAELSLMGAE (228 aa)). 42–49 (GSSGSGKS) lines the ATP pocket.

Belongs to the ABC transporter superfamily. Lipoprotein translocase (TC 3.A.1.125) family. As to quaternary structure, the complex is composed of two ATP-binding proteins (LolD) and two transmembrane proteins (LolC and LolE).

The protein localises to the cell inner membrane. Its function is as follows. Part of the ABC transporter complex LolCDE involved in the translocation of mature outer membrane-directed lipoproteins, from the inner membrane to the periplasmic chaperone, LolA. Responsible for the formation of the LolA-lipoprotein complex in an ATP-dependent manner. The polypeptide is Lipoprotein-releasing system ATP-binding protein LolD (Shigella boydii serotype 4 (strain Sb227)).